The chain runs to 116 residues: MARVTVEDCIQKVPNRFELVLLAAHRARMIREGSPLTIDRDNDKDPVVSLREIAETSIDLKVVKEALISNLQDIRPGEENEREADRVALQAAPAATEDDVLRAYQAELESGRDDRL.

Belongs to the RNA polymerase subunit omega family. In terms of assembly, the RNAP catalytic core consists of 2 alpha, 1 beta, 1 beta' and 1 omega subunit. When a sigma factor is associated with the core the holoenzyme is formed, which can initiate transcription.

The enzyme catalyses RNA(n) + a ribonucleoside 5'-triphosphate = RNA(n+1) + diphosphate. Its function is as follows. Promotes RNA polymerase assembly. Latches the N- and C-terminal regions of the beta' subunit thereby facilitating its interaction with the beta and alpha subunits. The chain is DNA-directed RNA polymerase subunit omega from Hyphomonas neptunium (strain ATCC 15444).